We begin with the raw amino-acid sequence, 1002 residues long: Isoleucine--tRNA ligase, mitochondrial (1002 aa).

Residues 94–104 (PYANGELHLGH) carry the 'HIGH' region motif. A 'KMSKS' region motif is present at residues 668–672 (KMSKS). Lys671 is an ATP binding site.

This sequence belongs to the class-I aminoacyl-tRNA synthetase family.

The protein resides in the mitochondrion matrix. It catalyses the reaction tRNA(Ile) + L-isoleucine + ATP = L-isoleucyl-tRNA(Ile) + AMP + diphosphate. This is Isoleucine--tRNA ligase, mitochondrial (ISM1) from Saccharomyces cerevisiae (strain ATCC 204508 / S288c) (Baker's yeast).